A 363-amino-acid chain; its full sequence is D-xylulose reductase (363 aa).

Positions 41, 66, and 159 each coordinate Zn(2+). 183 to 188 (GAGPVG) is a binding site for NAD(+).

This sequence belongs to the zinc-containing alcohol dehydrogenase family. Zn(2+) serves as cofactor.

The catalysed reaction is xylitol + NAD(+) = D-xylulose + NADH + H(+). It functions in the pathway carbohydrate degradation; L-arabinose degradation via L-arabinitol; D-xylulose 5-phosphate from L-arabinose (fungal route): step 4/5. The sequence is that of D-xylulose reductase (XYL2) from Scheffersomyces stipitis (strain ATCC 58785 / CBS 6054 / NBRC 10063 / NRRL Y-11545) (Yeast).